A 354-amino-acid chain; its full sequence is MAIKRNQGSNPKPEKKERLTKAETHQEQDNLEESIRPHSFDEYIGQKDLKDVLSIVIEAAKTRNEPMDHLLLYGPPGLGKTTISLILASAMGVNCKITAAPALERPRDITGLLVSLKPGDILFIDEIHRLNRLTEELLYPAMEDYRLEITIGKGQAARTRSIPLPKFTLVGATTKVGSLTSPLRDRFGLIQRLKFYEPEELALIIKRTAKLLNTSITEQGAAEIGRRSRGTPRIANRLLRRVRDYIQVKKFDSITQELAAEALDIYQVDPQGLDWTDRLILDTMITQFNGGPVGLEAVAAATGEDAKTIEEVYEPYLLQIGYLNRTPRGRVVTTVAYQHLGKTGEEQLSIFSEQ.

The span at 1–10 (MAIKRNQGSN) shows a compositional bias: polar residues. Residues 1 to 36 (MAIKRNQGSNPKPEKKERLTKAETHQEQDNLEESIR) form a disordered region. Positions 12-36 (KPEKKERLTKAETHQEQDNLEESIR) are enriched in basic and acidic residues. The large ATPase domain (RuvB-L) stretch occupies residues 13-196 (PEKKERLTKA…FGLIQRLKFY (184 aa)). ATP-binding positions include Ile-35, Arg-36, Gly-77, Lys-80, Thr-81, Thr-82, 143 to 145 (EDY), Arg-186, Tyr-196, and Arg-233. Thr-81 contacts Mg(2+). The tract at residues 197 to 267 (EPEELALIIK…LAAEALDIYQ (71 aa)) is small ATPAse domain (RuvB-S). Residues 270–354 (PQGLDWTDRL…EEQLSIFSEQ (85 aa)) form a head domain (RuvB-H) region. The DNA site is built by Arg-325 and Arg-330.

It belongs to the RuvB family. Homohexamer. Forms an RuvA(8)-RuvB(12)-Holliday junction (HJ) complex. HJ DNA is sandwiched between 2 RuvA tetramers; dsDNA enters through RuvA and exits via RuvB. An RuvB hexamer assembles on each DNA strand where it exits the tetramer. Each RuvB hexamer is contacted by two RuvA subunits (via domain III) on 2 adjacent RuvB subunits; this complex drives branch migration. In the full resolvosome a probable DNA-RuvA(4)-RuvB(12)-RuvC(2) complex forms which resolves the HJ.

It localises to the cytoplasm. It carries out the reaction ATP + H2O = ADP + phosphate + H(+). Its function is as follows. The RuvA-RuvB-RuvC complex processes Holliday junction (HJ) DNA during genetic recombination and DNA repair, while the RuvA-RuvB complex plays an important role in the rescue of blocked DNA replication forks via replication fork reversal (RFR). RuvA specifically binds to HJ cruciform DNA, conferring on it an open structure. The RuvB hexamer acts as an ATP-dependent pump, pulling dsDNA into and through the RuvAB complex. RuvB forms 2 homohexamers on either side of HJ DNA bound by 1 or 2 RuvA tetramers; 4 subunits per hexamer contact DNA at a time. Coordinated motions by a converter formed by DNA-disengaged RuvB subunits stimulates ATP hydrolysis and nucleotide exchange. Immobilization of the converter enables RuvB to convert the ATP-contained energy into a lever motion, pulling 2 nucleotides of DNA out of the RuvA tetramer per ATP hydrolyzed, thus driving DNA branch migration. The RuvB motors rotate together with the DNA substrate, which together with the progressing nucleotide cycle form the mechanistic basis for DNA recombination by continuous HJ branch migration. Branch migration allows RuvC to scan DNA until it finds its consensus sequence, where it cleaves and resolves cruciform DNA. The protein is Holliday junction branch migration complex subunit RuvB of Crocosphaera subtropica (strain ATCC 51142 / BH68) (Cyanothece sp. (strain ATCC 51142)).